Here is an 88-residue protein sequence, read N- to C-terminus: UPF0495 protein DEHA2C16280g (88 aa).

A helical membrane pass occupies residues 25–47; sequence YPLFAAMGVAVASGCFFTYRHFA.

It belongs to the UPF0495 family.

It is found in the membrane. The chain is UPF0495 protein DEHA2C16280g from Debaryomyces hansenii (strain ATCC 36239 / CBS 767 / BCRC 21394 / JCM 1990 / NBRC 0083 / IGC 2968) (Yeast).